We begin with the raw amino-acid sequence, 226 residues long: Orotate phosphoribosyltransferase (226 aa).

Lysine 29 lines the 5-phospho-alpha-D-ribose 1-diphosphate pocket. 37–38 (FF) is an orotate binding site. 5-phospho-alpha-D-ribose 1-diphosphate contacts are provided by residues 75–76 (YK), arginine 101, lysine 102, lysine 105, histidine 107, and 126–134 (DDVISAGTS). Residues serine 130 and arginine 158 each coordinate orotate.

The protein belongs to the purine/pyrimidine phosphoribosyltransferase family. PyrE subfamily. In terms of assembly, homodimer. The cofactor is Mg(2+).

The catalysed reaction is orotidine 5'-phosphate + diphosphate = orotate + 5-phospho-alpha-D-ribose 1-diphosphate. Its pathway is pyrimidine metabolism; UMP biosynthesis via de novo pathway; UMP from orotate: step 1/2. In terms of biological role, catalyzes the transfer of a ribosyl phosphate group from 5-phosphoribose 1-diphosphate to orotate, leading to the formation of orotidine monophosphate (OMP). This is Orotate phosphoribosyltransferase from Ralstonia nicotianae (strain ATCC BAA-1114 / GMI1000) (Ralstonia solanacearum).